Consider the following 256-residue polypeptide: DNA repair protein RecO (256 aa).

Belongs to the RecO family.

Functionally, involved in DNA repair and RecF pathway recombination. The chain is DNA repair protein RecO from Rhizobium johnstonii (strain DSM 114642 / LMG 32736 / 3841) (Rhizobium leguminosarum bv. viciae).